A 98-amino-acid polypeptide reads, in one-letter code: Protein S100-A13 (98 aa).

One can recognise an EF-hand domain in the interval 18–53 (STFFTFAGREGRKGSLNINEFKELATQQLPHLLKDV). 7 residues coordinate Ca(2+): Ser32, Glu37, Asp64, Asn66, Asp68, Glu70, and Glu75. Phosphoserine is present on Ser32.

It belongs to the S-100 family. In terms of assembly, homodimer. Part of a copper-dependent multiprotein complex containing S100A13, FGF1 and SYT1. Interacts with FGF1 and SYT1. Interacts with IL1A.

The protein localises to the cytoplasm. It localises to the secreted. Plays a role in the export of proteins that lack a signal peptide and are secreted by an alternative pathway. Binds two calcium ions per subunit. Binds one copper ion. Binding of one copper ion does not interfere with calcium binding. Required for the copper-dependent stress-induced export of IL1A and FGF1. The calcium-free protein binds to lipid vesicles containing phosphatidylserine, but not to vesicles containing phosphatidylcholine. In Mus musculus (Mouse), this protein is Protein S100-A13 (S100a13).